The chain runs to 201 residues: Kunitz type trypsin inhibitor 104 (201 aa).

Positions 1–24 are cleaved as a signal peptide; that stretch reads MSTRSLTIFILAHVWLLMATTSIA. Intrachain disulfides connect C63-C110, C161-C173, and C166-C169.

It belongs to the protease inhibitor I3 (leguminous Kunitz-type inhibitor) family. As to quaternary structure, interacts with CP.

The protein resides in the secreted. It localises to the extracellular space. The protein localises to the apoplast. Protease inhibitor involved in the control of mycorrhiza establishment and arbuscule development during root colonization by arbuscular mycorrhizal (AM) fungi (e.g. Rhizophagus irregularis). The chain is Kunitz type trypsin inhibitor 104 from Medicago truncatula (Barrel medic).